The following is a 56-amino-acid chain: uncharacterized protein (56 aa).

A helical transmembrane segment spans residues 33-53 (INIIYLAIMKIIMNIIMMIMI).

Its subcellular location is the host membrane. This is an uncharacterized protein from Bos taurus (Bovine).